A 416-amino-acid polypeptide reads, in one-letter code: Serine hydroxymethyltransferase (416 aa).

Residues leucine 121 and 125-127 contribute to the (6S)-5,6,7,8-tetrahydrofolate site; that span reads GHL. Position 229 is an N6-(pyridoxal phosphate)lysine (lysine 229).

The protein belongs to the SHMT family. In terms of assembly, homodimer. The cofactor is pyridoxal 5'-phosphate.

The protein localises to the cytoplasm. The enzyme catalyses (6R)-5,10-methylene-5,6,7,8-tetrahydrofolate + glycine + H2O = (6S)-5,6,7,8-tetrahydrofolate + L-serine. The protein operates within one-carbon metabolism; tetrahydrofolate interconversion. It functions in the pathway amino-acid biosynthesis; glycine biosynthesis; glycine from L-serine: step 1/1. In terms of biological role, catalyzes the reversible interconversion of serine and glycine with tetrahydrofolate (THF) serving as the one-carbon carrier. This reaction serves as the major source of one-carbon groups required for the biosynthesis of purines, thymidylate, methionine, and other important biomolecules. Also exhibits THF-independent aldolase activity toward beta-hydroxyamino acids, producing glycine and aldehydes, via a retro-aldol mechanism. This Neisseria gonorrhoeae (strain ATCC 700825 / FA 1090) protein is Serine hydroxymethyltransferase.